Here is a 74-residue protein sequence, read N- to C-terminus: Mitochondrial import receptor subunit TOM6 homolog (74 aa).

Positions 1-14 are enriched in low complexity; that stretch reads MASSGAGVTAAGSA. The tract at residues 1–24 is disordered; the sequence is MASSGAGVTAAGSANEAPEIPDNV. Residue Ala2 is modified to N-acetylalanine.

Belongs to the Tom6 family. Forms part of the preprotein translocase complex of the outer mitochondrial membrane (TOM complex) which consists of at least 7 different proteins (TOMM5, TOMM6, TOMM7, TOMM20, TOMM22, TOMM40 and TOMM70).

It localises to the mitochondrion outer membrane. This chain is Mitochondrial import receptor subunit TOM6 homolog (TOMM6), found in Bos taurus (Bovine).